A 161-amino-acid polypeptide reads, in one-letter code: UPF0225 protein GSU1048 (161 aa).

It belongs to the UPF0225 family.

This chain is UPF0225 protein GSU1048, found in Geobacter sulfurreducens (strain ATCC 51573 / DSM 12127 / PCA).